Here is a 236-residue protein sequence, read N- to C-terminus: uncharacterized protein (236 aa).

Residues Met1–Ala22 form the signal peptide.

This is an uncharacterized protein from Pasteurella multocida (strain Pm70).